Consider the following 148-residue polypeptide: MADQHFQQPLHFQGSYGQQQPRSYQVAKAATAVTAGGSLLVLSGLVLAGTVIALTIATPLLVIFSPVLVPALITVALITMGFLTSGGFGVAAVTVLSWIYKYVTGKQPPGADQLDQARHKLAGKARDIKDRAEQFGQQHVPSGQQQSS.

A2 carries the N-acetylalanine modification. Positions 2-28 (ADQHFQQPLHFQGSYGQQQPRSYQVAK) are polar. The interval 29 to 148 (AATAVTAGGS…HVPSGQQQSS (120 aa)) is hydrophobic. The next 2 membrane-spanning stretches (helical) occupy residues 37–57 (GSLL…LTIA) and 81–101 (GFLT…WIYK).

It belongs to the oleosin family.

It is found in the lipid droplet. Its subcellular location is the membrane. May have a structural role to stabilize the lipid body during desiccation of the seed by preventing coalescence of the oil. Probably interacts with both lipid and phospholipid moieties of lipid bodies. May also provide recognition signals for specific lipase anchorage in lipolysis during seedling growth. The protein is Oleosin 1 (OLE1) of Prunus dulcis (Almond).